The primary structure comprises 342 residues: Phosphate acyltransferase (342 aa).

Belongs to the PlsX family. Homodimer. Probably interacts with PlsY.

Its subcellular location is the cytoplasm. It carries out the reaction a fatty acyl-[ACP] + phosphate = an acyl phosphate + holo-[ACP]. It functions in the pathway lipid metabolism; phospholipid metabolism. Its function is as follows. Catalyzes the reversible formation of acyl-phosphate (acyl-PO(4)) from acyl-[acyl-carrier-protein] (acyl-ACP). This enzyme utilizes acyl-ACP as fatty acyl donor, but not acyl-CoA. The sequence is that of Phosphate acyltransferase from Shewanella amazonensis (strain ATCC BAA-1098 / SB2B).